We begin with the raw amino-acid sequence, 145 residues long: Partner of bursicon (145 aa).

Positions 1–28 are cleaved as a signal peptide; the sequence is MKENFSIMFIHSIFLILIIFIYSNETIA. Cystine bridges form between Cys-36/Cys-94, Cys-60/Cys-109, Cys-69/Cys-135, Cys-73/Cys-137, and Cys-91/Cys-140. The region spanning 36–131 is the CTCK domain; the sequence is CETLQSEVHI…NGVMEIKIRE (96 aa).

In terms of assembly, heterodimer of burs and pburs.

It localises to the secreted. Final heterodimeric neurohormone released at the end of the molting cycle, involved in the sclerotization (tanning) of the insect cuticle, melanization and wing spreading. This is Partner of bursicon (pburs) from Apis mellifera (Honeybee).